Consider the following 1011-residue polypeptide: Lysosomal alpha-mannosidase (1011 aa).

The first 49 residues, Met-1–Ala-49, serve as a signal peptide directing secretion. Disulfide bonds link Cys-55/Cys-358 and Cys-268/Cys-273. Zn(2+) is bound by residues His-72 and Asp-74. The N-linked (GlcNAc...) asparagine glycan is linked to Asn-133. Asp-196 lines the Zn(2+) pocket. Asp-196 serves as the catalytic Nucleophile. 2 N-linked (GlcNAc...) asparagine glycosylation sites follow: Asn-310 and Asn-367. Disulfide bonds link Cys-412–Cys-472 and Cys-493–Cys-501. Zn(2+) is bound at residue His-446. Residues Asn-497, Asn-645, Asn-651, Asn-692, Asn-766, Asn-832, Asn-930, and Asn-989 are each glycosylated (N-linked (GlcNAc...) asparagine).

This sequence belongs to the glycosyl hydrolase 38 family. Zn(2+) serves as cofactor. In terms of processing, first processed into 3 peptides of 70 kDa, 42 kDa (D) and 13/15 kDa (E). The 70 kDa peptide is further processed into three peptides (A, B and C). The A, B and C peptides are disulfide-linked. Heavily glycosylated.

The protein localises to the lysosome. It carries out the reaction Hydrolysis of terminal, non-reducing alpha-D-mannose residues in alpha-D-mannosides.. Functionally, necessary for the catabolism of N-linked carbohydrates released during glycoprotein turnover. Cleaves all known types of alpha-mannosidic linkages. This chain is Lysosomal alpha-mannosidase (MAN2B1), found in Homo sapiens (Human).